Reading from the N-terminus, the 875-residue chain is Alanine--tRNA ligase (875 aa).

The Zn(2+) site is built by His564, His568, Cys666, and His670.

It belongs to the class-II aminoacyl-tRNA synthetase family. In terms of assembly, homotetramer. It depends on Zn(2+) as a cofactor.

The protein resides in the cytoplasm. The enzyme catalyses tRNA(Ala) + L-alanine + ATP = L-alanyl-tRNA(Ala) + AMP + diphosphate. Its function is as follows. Catalyzes the attachment of alanine to tRNA(Ala) in a two-step reaction: alanine is first activated by ATP to form Ala-AMP and then transferred to the acceptor end of tRNA(Ala). Also edits incorrectly charged Ser-tRNA(Ala) and Gly-tRNA(Ala) via its editing domain. In Serratia proteamaculans (strain 568), this protein is Alanine--tRNA ligase.